The following is a 213-amino-acid chain: Uridine kinase (213 aa).

Position 15-22 (15-22) interacts with ATP; sequence GASASGKS.

The protein belongs to the uridine kinase family.

It is found in the cytoplasm. It carries out the reaction uridine + ATP = UMP + ADP + H(+). The enzyme catalyses cytidine + ATP = CMP + ADP + H(+). The protein operates within pyrimidine metabolism; CTP biosynthesis via salvage pathway; CTP from cytidine: step 1/3. Its pathway is pyrimidine metabolism; UMP biosynthesis via salvage pathway; UMP from uridine: step 1/1. The sequence is that of Uridine kinase from Yersinia pseudotuberculosis serotype O:1b (strain IP 31758).